The primary structure comprises 726 residues: MEFKRDNTVRFYGDEKQTIEVGEKRVPLFKSTTAPFMKQEVLPKKSKTRLKIPRFGRFKVFPENFEIERDKILDPGGDAVLQWNRVFLFWCLVALYVDPLFFFLSSVKRIGRSSCMTTDLKLGIVITFFRTLADLFYVLHIVIKFRTAYVSRTSRVFGRGELVKDPKLIARRYLRSDFIVDLIACLPLPQIVSWFILPSIRSSHSDHTTNALVLIVLVQYIPRLYLIFPLSAEIIKATGVVTTTAWAGAAYNLLQYMLASHILGSAWYLLSIERQATCWKAECHKESVPLQCVTDFFDCGTLHRDDRNNWQNTTVVFSNCDPSNNIQFTFGIFADALTKNVVSSPFLEKYLYCLWFGLQNLSSYGQNLSTSTSVLETMFAILVAIFGLVLFALLIGNMQTYLQSITVRLEEWRLKRRDTEEWMGHRLLPQNLRERVRRFVQYKWLATRGVDEETILHSLPADLRRDIQRHLCLDLVRRVPLFAQMDDQLLDAICERLASSLSTQGNYIVREGDPVTEMLFIIRGKLESSTTNGGRTGFFNSITLRPGDFCGEELLAWALLPKSTVNLPSSTRTVRALEEVEAFALQAGDLKFVANQFRRLHSKKLQHTFRYYSHQWRTWAACFVQVAWRRYKRKKLAKSLSLAESFSSYDEEEAVAVAATEEMSHEGEAQSGAKARHHTSNVKPHFAATILASRFAKNTRRTAHKLKDVEIPMLPKPDEPDFSVDD.

Topologically, residues 1-86 (MEFKRDNTVR…GDAVLQWNRV (86 aa)) are cytoplasmic. A helical membrane pass occupies residues 87–107 (FLFWCLVALYVDPLFFFLSSV). The Extracellular segment spans residues 108-122 (KRIGRSSCMTTDLKL). Residues 123–143 (GIVITFFRTLADLFYVLHIVI) form a helical membrane-spanning segment. Topologically, residues 144–177 (KFRTAYVSRTSRVFGRGELVKDPKLIARRYLRSD) are cytoplasmic. Residues 178-198 (FIVDLIACLPLPQIVSWFILP) form a helical membrane-spanning segment. Residues 199–211 (SIRSSHSDHTTNA) lie on the Extracellular side of the membrane. The chain crosses the membrane as a helical span at residues 212–232 (LVLIVLVQYIPRLYLIFPLSA). The Cytoplasmic segment spans residues 233-252 (EIIKATGVVTTTAWAGAAYN). The chain crosses the membrane as a helical span at residues 253–273 (LLQYMLASHILGSAWYLLSIE). Residues 274–377 (RQATCWKAEC…LSTSTSVLET (104 aa)) lie on the Extracellular side of the membrane. Residues 378-398 (MFAILVAIFGLVLFALLIGNM) form a helical membrane-spanning segment. Residues 399 to 726 (QTYLQSITVR…PDEPDFSVDD (328 aa)) lie on the Cytoplasmic side of the membrane. Residues 481–605 (LFAQ…SKKL) and Glu-552 contribute to the a nucleoside 3',5'-cyclic phosphate site. The calmodulin-binding stretch occupies residues 597–612 (FRRLHSKKLQHTFRYY). The region spanning 617 to 646 (RTWAACFVQVAWRRYKRKKLAKSLSLAESF) is the IQ domain. The segment at 707–726 (KDVEIPMLPKPDEPDFSVDD) is disordered.

It belongs to the cyclic nucleotide-gated cation channel (TC 1.A.1.5) family. Homotetramer or heterotetramer.

The protein localises to the cell membrane. Its function is as follows. Probable cyclic nucleotide-gated ion channel. In Arabidopsis thaliana (Mouse-ear cress), this protein is Probable cyclic nucleotide-gated ion channel 14 (CNGC14).